The chain runs to 597 residues: Phosphoinositide phospholipase C 4 (597 aa).

One can recognise an EF-hand domain in the interval Gly26–Glu60. Positions Gln114–Lys257 constitute a PI-PLC X-box domain. Residues His129 and His174 contribute to the active site. The segment covering Pro259–Glu290 has biased composition (basic and acidic residues). The segment at Pro259 to Ser324 is disordered. Residues Ile293 to Leu309 show a composition bias toward polar residues. The PI-PLC Y-box domain occupies Lys333–Met449. Residues Met449 to Asn579 enclose the C2 domain.

The cofactor is Ca(2+). In terms of tissue distribution, low expression in leaves, roots, flowers and siliques. Expressed in pollen and in cells of the stigma surface.

Its subcellular location is the cytoplasm. It localises to the cytosol. It is found in the cell membrane. It catalyses the reaction a 1,2-diacyl-sn-glycero-3-phospho-(1D-myo-inositol-4,5-bisphosphate) + H2O = 1D-myo-inositol 1,4,5-trisphosphate + a 1,2-diacyl-sn-glycerol + H(+). Its function is as follows. The production of the second messenger molecules diacylglycerol (DAG) and inositol 1,4,5-trisphosphate (IP3) is mediated by activated phosphatidylinositol-specific phospholipase C enzymes. The sequence is that of Phosphoinositide phospholipase C 4 (PLC4) from Arabidopsis thaliana (Mouse-ear cress).